The following is a 940-amino-acid chain: Isoleucine--tRNA ligase (940 aa).

The 'HIGH' region motif lies at 58 to 68 (PYANGDIHIGH). Glu564 is a binding site for L-isoleucyl-5'-AMP. The short motif at 605-609 (KMSKS) is the 'KMSKS' region element. Lys608 serves as a coordination point for ATP. Cys903, Cys906, Cys923, and Cys926 together coordinate Zn(2+).

Belongs to the class-I aminoacyl-tRNA synthetase family. IleS type 1 subfamily. As to quaternary structure, monomer. It depends on Zn(2+) as a cofactor.

The protein resides in the cytoplasm. The enzyme catalyses tRNA(Ile) + L-isoleucine + ATP = L-isoleucyl-tRNA(Ile) + AMP + diphosphate. Functionally, catalyzes the attachment of isoleucine to tRNA(Ile). As IleRS can inadvertently accommodate and process structurally similar amino acids such as valine, to avoid such errors it has two additional distinct tRNA(Ile)-dependent editing activities. One activity is designated as 'pretransfer' editing and involves the hydrolysis of activated Val-AMP. The other activity is designated 'posttransfer' editing and involves deacylation of mischarged Val-tRNA(Ile). The sequence is that of Isoleucine--tRNA ligase from Shewanella pealeana (strain ATCC 700345 / ANG-SQ1).